We begin with the raw amino-acid sequence, 272 residues long: Plastid division protein PDV1 (272 aa).

At 1–206 the chain is on the cytoplasmic side; that stretch reads MGEMEIEEIE…KRALGFNHVK (206 aa). Positions 40 to 61 are disordered; sequence KPSNRSEKRKNPHGNSGEDKRP. Positions 78–102 form a coiled coil; it reads IQEAKSLNAIRTALENLEDQLEFFH. Residues 207-225 form a helical membrane-spanning segment; it reads GVLGNAAIFAISVVAMLHL. Residues 226-272 lie on the Chloroplast intermembrane side of the membrane; that stretch reads HQVATSEHHLQKKEDRFYRSQQRKTYGRDKSSADRSLDHLDVMMARG.

In terms of assembly, interacts (via C-terminus) with CDP1/PARC6 (via C-terminus). Interacts with ARC5/DRP5B. As to expression, expressed in young developing leaves, root tips, shoot apices, and flower buds (sepals, petals, stamens, and pistils), but not in developed tissues.

The protein resides in the plastid. It localises to the chloroplast outer membrane. Its function is as follows. Component of the plastid division machinery. Required to mediate the dissociation of ARC5/DRP5B from plastid outer envelope membranes (OEMs) at the midplastid constriction site in the cytoplasm, thus triggering ARC5/DRP5B ring turnover at the chloroplast division site. Binding to phosphatidylinositol 4-phosphate (PI4P) modulates negatively chloroplast division. In Arabidopsis thaliana (Mouse-ear cress), this protein is Plastid division protein PDV1.